A 94-amino-acid chain; its full sequence is Integration host factor subunit beta (94 aa).

This sequence belongs to the bacterial histone-like protein family. In terms of assembly, heterodimer of an alpha and a beta chain.

In terms of biological role, this protein is one of the two subunits of integration host factor, a specific DNA-binding protein that functions in genetic recombination as well as in transcriptional and translational control. The sequence is that of Integration host factor subunit beta from Edwardsiella ictaluri (strain 93-146).